The following is a 318-amino-acid chain: Isoeugenol synthase 1 (318 aa).

NADP(+) contacts are provided by residues 10-13 (TGYI), 32-43 (ARPLTPDSTPSS), Arg-33, 84-86 (VPM), 109-111 (SEF), Lys-131, and 151-153 (NCF). The active-site Proton donor/acceptor is the Lys-131. Pro-260 contacts substrate.

Belongs to the NmrA-type oxidoreductase family. Mostly expressed in petals, and, to a lower extent, in sepals, stamens and pistils.

The enzyme catalyses (E)-isoeugenol + acetate + NADP(+) = (E)-coniferyl acetate + NADPH. It functions in the pathway aromatic compound metabolism; phenylpropanoid biosynthesis. Its function is as follows. Catalyzes the synthesis of the phenylpropene isoeugenol from coniferyl acetate. Phenylpropenes are the primary constituents of various essential plant oils. They are produced as antimicrobial and antianimal compounds, or as floral attractants of pollinators. Isoeugenol is a characteristic aromatic constituent of spices and a floral volatile compound. This Clarkia breweri (Fairy fans) protein is Isoeugenol synthase 1.